We begin with the raw amino-acid sequence, 779 residues long: Kazrin (779 aa).

Residues 79–261 (AQVLLREEVV…LATLTKDVPK (183 aa)) adopt a coiled-coil conformation. A disordered region spans residues 295-366 (QQTLYHSHPP…PGPVQKSLHN (72 aa)). 3 positions are modified to phosphoserine: S356, S371, and S391. The interval 403 to 429 (KSLDPGLFDDSDSQCSPTRHSLSLSEG) is disordered. A compositionally biased stretch (polar residues) spans 415–426 (SQCSPTRHSLSL). 3 SAM domains span residues 450-515 (WKAG…YRDA), 528-592 (DHHW…LYQV), and 616-683 (WTNQ…STIF). The segment at 685–779 (PSNSTGIRES…GYGSLEVTNV (95 aa)) is disordered. The span at 736–746 (SSKEPDFHDDY) shows a compositional bias: basic and acidic residues.

Belongs to the kazrin family. In terms of tissue distribution, expressed in skin interfollicular epidermis and hair follicles. Expressed in tongue epithelium basal suprabasal layers.

It is found in the cell junction. It localises to the nucleus. The protein resides in the cytoplasm. The protein localises to the cytoskeleton. In terms of biological role, component of the cornified envelope of keratinocytes. May be involved in the interplay between adherens junctions and desmosomes. The function in the nucleus is not known. The protein is Kazrin (Kazn) of Mus musculus (Mouse).